The following is a 166-amino-acid chain: NAD(P)H-quinone oxidoreductase subunit I, chloroplastic (166 aa).

4Fe-4S ferredoxin-type domains follow at residues 55-84 and 95-124; these read GRIH…VDWK and LNYS…MTEE. The [4Fe-4S] cluster site is built by C64, C67, C70, C74, C104, C107, C110, and C114.

Belongs to the complex I 23 kDa subunit family. As to quaternary structure, NDH is composed of at least 16 different subunits, 5 of which are encoded in the nucleus. Requires [4Fe-4S] cluster as cofactor.

Its subcellular location is the plastid. It is found in the chloroplast thylakoid membrane. The enzyme catalyses a plastoquinone + NADH + (n+1) H(+)(in) = a plastoquinol + NAD(+) + n H(+)(out). It carries out the reaction a plastoquinone + NADPH + (n+1) H(+)(in) = a plastoquinol + NADP(+) + n H(+)(out). NDH shuttles electrons from NAD(P)H:plastoquinone, via FMN and iron-sulfur (Fe-S) centers, to quinones in the photosynthetic chain and possibly in a chloroplast respiratory chain. The immediate electron acceptor for the enzyme in this species is believed to be plastoquinone. Couples the redox reaction to proton translocation, and thus conserves the redox energy in a proton gradient. The polypeptide is NAD(P)H-quinone oxidoreductase subunit I, chloroplastic (Lasianthaea macrocephala (Lipochaeta macrocephala)).